Reading from the N-terminus, the 278-residue chain is Serine/threonine-protein phosphatase PGAM5, mitochondrial (278 aa).

A helical membrane pass occupies residues 7–27 (LIAGGSAAAAAAAILGAAAVG).

Belongs to the phosphoglycerate mutase family. BPG-dependent PGAM subfamily. Post-translationally, phosphorylated by the RIPK1/RIPK3 complex under necrotic conditions. This phosphorylation increases PGAM5 phosphatase activity.

The protein localises to the mitochondrion outer membrane. It carries out the reaction O-phospho-L-seryl-[protein] + H2O = L-seryl-[protein] + phosphate. The catalysed reaction is O-phospho-L-threonyl-[protein] + H2O = L-threonyl-[protein] + phosphate. Displays phosphatase activity for serine/threonine residues. Has apparently no phosphoglycerate mutase activity. May be regulator of mitochondrial dynamics. May be a central mediator for programmed necrosis. This is Serine/threonine-protein phosphatase PGAM5, mitochondrial (pgam5) from Xenopus tropicalis (Western clawed frog).